A 133-amino-acid polypeptide reads, in one-letter code: Small ribosomal subunit protein uS8 (133 aa).

Belongs to the universal ribosomal protein uS8 family. In terms of assembly, part of the 30S ribosomal subunit. Contacts proteins S5 and S12.

Its function is as follows. One of the primary rRNA binding proteins, it binds directly to 16S rRNA central domain where it helps coordinate assembly of the platform of the 30S subunit. The protein is Small ribosomal subunit protein uS8 of Synechococcus sp. (strain RCC307).